We begin with the raw amino-acid sequence, 474 residues long: Aspartyl/glutamyl-tRNA(Asn/Gln) amidotransferase subunit B (474 aa).

Belongs to the GatB/GatE family. GatB subfamily. Heterotrimer of A, B and C subunits.

The enzyme catalyses L-glutamyl-tRNA(Gln) + L-glutamine + ATP + H2O = L-glutaminyl-tRNA(Gln) + L-glutamate + ADP + phosphate + H(+). It catalyses the reaction L-aspartyl-tRNA(Asn) + L-glutamine + ATP + H2O = L-asparaginyl-tRNA(Asn) + L-glutamate + ADP + phosphate + 2 H(+). Functionally, allows the formation of correctly charged Asn-tRNA(Asn) or Gln-tRNA(Gln) through the transamidation of misacylated Asp-tRNA(Asn) or Glu-tRNA(Gln) in organisms which lack either or both of asparaginyl-tRNA or glutaminyl-tRNA synthetases. The reaction takes place in the presence of glutamine and ATP through an activated phospho-Asp-tRNA(Asn) or phospho-Glu-tRNA(Gln). The chain is Aspartyl/glutamyl-tRNA(Asn/Gln) amidotransferase subunit B from Wolbachia sp. subsp. Brugia malayi (strain TRS).